Consider the following 356-residue polypeptide: Probable butyrate kinase (356 aa).

It belongs to the acetokinase family.

Its subcellular location is the cytoplasm. It catalyses the reaction butanoate + ATP = butanoyl phosphate + ADP. The polypeptide is Probable butyrate kinase (Coprothermobacter proteolyticus (strain ATCC 35245 / DSM 5265 / OCM 4 / BT)).